The sequence spans 315 residues: Small ribosomal subunit protein uS2 (315 aa).

A disordered region spans residues 241-315 (AQHGEERRPG…QPAPGSDANR (75 aa)). Residues 243-288 (HGEERRPGEEDRDAASERGQKDRRDRRDRRGGGRDRERREPREDRA) are compositionally biased toward basic and acidic residues.

It belongs to the universal ribosomal protein uS2 family.

This Anaeromyxobacter sp. (strain Fw109-5) protein is Small ribosomal subunit protein uS2.